Reading from the N-terminus, the 354-residue chain is S-adenosylmethionine:tRNA ribosyltransferase-isomerase (354 aa).

It belongs to the QueA family. In terms of assembly, monomer.

Its subcellular location is the cytoplasm. The enzyme catalyses 7-aminomethyl-7-carbaguanosine(34) in tRNA + S-adenosyl-L-methionine = epoxyqueuosine(34) in tRNA + adenine + L-methionine + 2 H(+). It participates in tRNA modification; tRNA-queuosine biosynthesis. Functionally, transfers and isomerizes the ribose moiety from AdoMet to the 7-aminomethyl group of 7-deazaguanine (preQ1-tRNA) to give epoxyqueuosine (oQ-tRNA). This Klebsiella pneumoniae (strain 342) protein is S-adenosylmethionine:tRNA ribosyltransferase-isomerase.